Reading from the N-terminus, the 89-residue chain is DNA/RNA-binding protein Alba (89 aa).

Lys11 is modified (N6-acetyllysine).

It belongs to the histone-like Alba family. In terms of processing, acetylated. Acetylation at Lys-11 decreases DNA-binding affinity.

The protein localises to the cytoplasm. The protein resides in the chromosome. Functionally, binds double-stranded DNA tightly but without sequence specificity. Involved in DNA compaction. This chain is DNA/RNA-binding protein Alba, found in Thermoplasma acidophilum (strain ATCC 25905 / DSM 1728 / JCM 9062 / NBRC 15155 / AMRC-C165).